The following is a 640-amino-acid chain: Serine/threonine-protein kinase WNG1 (640 aa).

Residues 1–70 (MPEQDLASGF…GVLCTVEAGA (70 aa)) form the signal peptide. Disordered stretches follow at residues 100–222 (PEVT…AQPT) and 237–280 (SHPD…DASN). The span at 104–120 (HASSEGSPQFESSLSQQ) shows a compositional bias: polar residues. Residues 124 to 141 (RPADRGEAHNGEEPRKDA) are compositionally biased toward basic and acidic residues. Over residues 175-186 (QRQASSAAESLA) the composition is skewed to low complexity. A compositionally biased stretch (basic and acidic residues) spans 248–279 (FSKKQEGRRERRLAVRGDDSFARGHNRDRDAS). The region spanning 291-593 (WAKIAALATG…LKQVMEDPYF (303 aa)) is the Protein kinase domain. Lysine 395 is a binding site for ATP. Residue aspartate 486 is the Proton acceptor of the active site. Positions 609-640 (PFRGDFSIDDPDAGGKMYIPPSKEQDHEQENE) are disordered. Basic and acidic residues predominate over residues 631–640 (KEQDHEQENE).

This sequence belongs to the protein kinase superfamily. STE Ser/Thr protein kinase family. WNG subfamily. It depends on Mg(2+) as a cofactor.

It localises to the cytoplasmic granule. The protein localises to the secreted. The protein resides in the parasitophorous vacuole lumen. The catalysed reaction is L-seryl-[protein] + ATP = O-phospho-L-seryl-[protein] + ADP + H(+). The enzyme catalyses L-threonyl-[protein] + ATP = O-phospho-L-threonyl-[protein] + ADP + H(+). Functionally, serine/threonine-protein kinase which, at the tachyzoite stage, phosphorylates several parasitophorous vacuole (PV)-resident proteins such as GRA2, GRA6 and GRA7. By phosphorylating GRA2 and GRA6, regulates the formation of a functional intravacuolar network (IVN); IVN is composed of membranous tubules that bud from the PV membrane into the vacuolar lumen. Plays a role in the establishement of chronic infection in the host by controlling cyst formation in the host tissues. In Toxoplasma gondii, this protein is Serine/threonine-protein kinase WNG1.